The chain runs to 340 residues: Quinic acid degradation cluster protein x (340 aa).

The Mg(2+) site is built by E90, D115, L117, D118, and D262. E90 is a binding site for substrate. Substrate contacts are provided by residues 117 to 120 (LDGT) and D262.

It belongs to the inositol monophosphatase superfamily.

Functionally, part of the qa gene cluster that mediates the catabolism of quinic acid (QA) and as such, allows the use of QA as a sole carbon source. Its function within the pathway has not been determined yet but it probably plays a regulatory role. The qa cluster encodes 3 inducible enymes (qa-2, qa-3 and qa-4) catalyzing the first three reactions in the catabolism of quinic acid to protocatechuic acid (also known as 3,4-Dihydroxybenzoic acid). This is Quinic acid degradation cluster protein x from Neurospora crassa (strain ATCC 24698 / 74-OR23-1A / CBS 708.71 / DSM 1257 / FGSC 987).